The following is an 80-amino-acid chain: Exodeoxyribonuclease 7 small subunit (80 aa).

The protein belongs to the XseB family. Heterooligomer composed of large and small subunits.

It localises to the cytoplasm. It carries out the reaction Exonucleolytic cleavage in either 5'- to 3'- or 3'- to 5'-direction to yield nucleoside 5'-phosphates.. Its function is as follows. Bidirectionally degrades single-stranded DNA into large acid-insoluble oligonucleotides, which are then degraded further into small acid-soluble oligonucleotides. This chain is Exodeoxyribonuclease 7 small subunit, found in Streptomyces avermitilis (strain ATCC 31267 / DSM 46492 / JCM 5070 / NBRC 14893 / NCIMB 12804 / NRRL 8165 / MA-4680).